We begin with the raw amino-acid sequence, 379 residues long: PqqA peptide cyclase (379 aa).

Positions 8–220 (LPAPIGLLAE…IRVVEEARER (213 aa)) constitute a Radical SAM core domain. [4Fe-4S] cluster-binding residues include Cys-22, Cys-26, and Cys-29.

Belongs to the radical SAM superfamily. PqqE family. Interacts with PqqD. The interaction is necessary for activity of PqqE. [4Fe-4S] cluster is required as a cofactor.

It carries out the reaction [PQQ precursor protein] + S-adenosyl-L-methionine = E-Y cross-linked-[PQQ precursor protein] + 5'-deoxyadenosine + L-methionine + H(+). It participates in cofactor biosynthesis; pyrroloquinoline quinone biosynthesis. Its function is as follows. Catalyzes the cross-linking of a glutamate residue and a tyrosine residue in the PqqA protein as part of the biosynthesis of pyrroloquinoline quinone (PQQ). The polypeptide is PqqA peptide cyclase (Methylobacterium sp. (strain 4-46)).